Reading from the N-terminus, the 179-residue chain is Adenine phosphoribosyltransferase (179 aa).

The protein belongs to the purine/pyrimidine phosphoribosyltransferase family. In terms of assembly, homodimer.

It localises to the cytoplasm. It carries out the reaction AMP + diphosphate = 5-phospho-alpha-D-ribose 1-diphosphate + adenine. It functions in the pathway purine metabolism; AMP biosynthesis via salvage pathway; AMP from adenine: step 1/1. Functionally, catalyzes a salvage reaction resulting in the formation of AMP, that is energically less costly than de novo synthesis. In Bradyrhizobium sp. (strain ORS 278), this protein is Adenine phosphoribosyltransferase.